Here is a 243-residue protein sequence, read N- to C-terminus: Ice-binding protein K3-B1 (243 aa).

Positions 1–20 are cleaved as a signal peptide; sequence MFSASSLLAVIALAISSVSA.

This sequence belongs to the ice-binding protein family.

Functionally, binds to the surface of ice crystals. Has low thermal hysteresis (TH) activity, which is the ability to lower the freezing point of an aqueous solution below its melting point. The TH activity of this protein is approximately 0.3 degrees Celsius at 11 mM. The protein is Ice-binding protein K3-B1 of Typhula ishikariensis (Gray snow mold fungus).